We begin with the raw amino-acid sequence, 371 residues long: Alanine dehydrogenase (371 aa).

Substrate-binding residues include Arg15 and Lys75. The Proton donor/acceptor role is filled by His96. NAD(+) contacts are provided by residues Ser134, Asp198, Arg203, Ser220, 239–240, 267–270, Lys279, and 298–301; these read VL, VAID, and VANM. Catalysis depends on Asp270, which acts as the Proton donor/acceptor.

It belongs to the AlaDH/PNT family. Requires Mg(2+) as cofactor.

The catalysed reaction is L-alanine + NAD(+) + H2O = pyruvate + NH4(+) + NADH + H(+). The protein operates within amino-acid degradation; L-alanine degradation via dehydrogenase pathway; NH(3) and pyruvate from L-alanine: step 1/1. Catalyzes the reversible reductive amination of pyruvate to L-alanine. This Halomonas elongata (strain ATCC 33173 / DSM 2581 / NBRC 15536 / NCIMB 2198 / 1H9) protein is Alanine dehydrogenase.